We begin with the raw amino-acid sequence, 125 residues long: Small ribosomal subunit protein bS6 (125 aa).

The protein belongs to the bacterial ribosomal protein bS6 family.

Binds together with bS18 to 16S ribosomal RNA. The protein is Small ribosomal subunit protein bS6 of Baumannia cicadellinicola subsp. Homalodisca coagulata.